The following is a 406-amino-acid chain: Cysteine desulfurase (406 aa).

An N6-(pyridoxal phosphate)lysine modification is found at K226. C364 serves as the catalytic Cysteine persulfide intermediate.

This sequence belongs to the class-V pyridoxal-phosphate-dependent aminotransferase family. Csd subfamily. Homodimer. Interacts with SufE and the SufBCD complex composed of SufB, SufC and SufD. The interaction with SufE is required to mediate the direct transfer of the sulfur atom from the S-sulfanylcysteine. Requires pyridoxal 5'-phosphate as cofactor.

It is found in the cytoplasm. It catalyses the reaction (sulfur carrier)-H + L-cysteine = (sulfur carrier)-SH + L-alanine. The enzyme catalyses L-selenocysteine + AH2 = hydrogenselenide + L-alanine + A + H(+). Its pathway is cofactor biosynthesis; iron-sulfur cluster biosynthesis. In terms of biological role, cysteine desulfurases mobilize the sulfur from L-cysteine to yield L-alanine, an essential step in sulfur metabolism for biosynthesis of a variety of sulfur-containing biomolecules. Component of the suf operon, which is activated and required under specific conditions such as oxidative stress and iron limitation. Acts as a potent selenocysteine lyase in vitro, that mobilizes selenium from L-selenocysteine. Selenocysteine lyase activity is however unsure in vivo. The sequence is that of Cysteine desulfurase from Shigella sonnei (strain Ss046).